Reading from the N-terminus, the 399-residue chain is LIM/homeobox protein Lhx5 (399 aa).

2 LIM zinc-binding domains span residues 3 to 61 and 62 to 125; these read VHCA…RRFG and TKCA…ASAI. Disordered stretches follow at residues 136–185 and 301–399; these read CTDR…GPRT and PSSQ…NTVW. Residues 151–167 show a composition bias toward basic and acidic residues; it reads DDTKETDNSTSSDKDTN. A DNA-binding region (homeobox) is located at residues 180–239; sequence RRGPRTTIKAKQLETLKAAFVATPKPTRHIREQLAQETGLNMRVIQVWFQNRRSKERRMK.

It is found in the nucleus. Its function is as follows. Probably involved in the patterning of the nervous system, in particular in the early specification of the diencephalon. This Danio rerio (Zebrafish) protein is LIM/homeobox protein Lhx5 (lhx5).